The primary structure comprises 577 residues: Arginine--tRNA ligase (577 aa).

The 'HIGH' region signature appears at 123 to 133; sequence PNVAKEMHVGH.

It belongs to the class-I aminoacyl-tRNA synthetase family. Monomer.

It is found in the cytoplasm. The catalysed reaction is tRNA(Arg) + L-arginine + ATP = L-arginyl-tRNA(Arg) + AMP + diphosphate. This chain is Arginine--tRNA ligase, found in Cronobacter sakazakii (strain ATCC BAA-894) (Enterobacter sakazakii).